A 972-amino-acid chain; its full sequence is mRNA transport regulator MTR10 (972 aa).

Its subcellular location is the nucleus. Functionally, involved in mRNA transport from nucleus to cytoplasm. This is mRNA transport regulator MTR10 (MTR10) from Saccharomyces cerevisiae (strain ATCC 204508 / S288c) (Baker's yeast).